We begin with the raw amino-acid sequence, 257 residues long: Aspartate/glutamate leucyltransferase (257 aa).

It belongs to the R-transferase family. Bpt subfamily.

The protein localises to the cytoplasm. The enzyme catalyses N-terminal L-glutamyl-[protein] + L-leucyl-tRNA(Leu) = N-terminal L-leucyl-L-glutamyl-[protein] + tRNA(Leu) + H(+). It catalyses the reaction N-terminal L-aspartyl-[protein] + L-leucyl-tRNA(Leu) = N-terminal L-leucyl-L-aspartyl-[protein] + tRNA(Leu) + H(+). In terms of biological role, functions in the N-end rule pathway of protein degradation where it conjugates Leu from its aminoacyl-tRNA to the N-termini of proteins containing an N-terminal aspartate or glutamate. This chain is Aspartate/glutamate leucyltransferase, found in Sphingopyxis alaskensis (strain DSM 13593 / LMG 18877 / RB2256) (Sphingomonas alaskensis).